Consider the following 151-residue polypeptide: uncharacterized protein (151 aa).

The interval 130 to 151 (REIPRTEPDPETTPDNSYRNYL) is disordered.

This is an uncharacterized protein from Enterobacteria phage P4 (Bacteriophage P4).